The primary structure comprises 460 residues: tRNA modification GTPase MnmE (460 aa).

(6S)-5-formyl-5,6,7,8-tetrahydrofolate-binding residues include Arg-29, Glu-89, and Arg-128. Positions 224-382 (GVPTVIIGKP…LKQNLLEIIQ (159 aa)) constitute a TrmE-type G domain. Asn-234 contacts K(+). Residues 234-239 (NAGKST), 253-259 (SEIAGTT), and 278-281 (DTAG) contribute to the GTP site. Ser-238 contributes to the Mg(2+) binding site. 3 residues coordinate K(+): Ser-253, Ile-255, and Thr-258. Thr-259 contributes to the Mg(2+) binding site. Lys-460 is a (6S)-5-formyl-5,6,7,8-tetrahydrofolate binding site.

Belongs to the TRAFAC class TrmE-Era-EngA-EngB-Septin-like GTPase superfamily. TrmE GTPase family. As to quaternary structure, homodimer. Heterotetramer of two MnmE and two MnmG subunits. It depends on K(+) as a cofactor.

It is found in the cytoplasm. Exhibits a very high intrinsic GTPase hydrolysis rate. Involved in the addition of a carboxymethylaminomethyl (cmnm) group at the wobble position (U34) of certain tRNAs, forming tRNA-cmnm(5)s(2)U34. This chain is tRNA modification GTPase MnmE, found in Cytophaga hutchinsonii (strain ATCC 33406 / DSM 1761 / CIP 103989 / NBRC 15051 / NCIMB 9469 / D465).